Reading from the N-terminus, the 615-residue chain is Nif-specific regulatory protein (615 aa).

Residues 68 to 210 enclose the GAF domain; sequence RLEVTLANVV…MVANLVGQTV (143 aa). The region spanning 256 to 484 is the Sigma-54 factor interaction domain; the sequence is IVGDSPLVKR…LENCIRRTAT (229 aa). Residues 284–291 and 347–356 each bind ATP; these read GESGTGKE and AHGGTLFLDE. Positions 485 to 572 are inter-domain linker; the sequence is LAHDAVITPH…CPAVPPRQSE (88 aa). A divalent metal cation-binding residues include cysteine 498 and cysteine 503. A C-terminal DNA-binding domain region spans residues 573–615; the sequence is KEQLLQAMERSGWVQAKAARLLNLTPRQVGYALRKYDIDIKRF. A DNA-binding region (H-T-H motif) is located at residues 587 to 606; it reads QAKAARLLNLTPRQVGYALR.

Interacts with sigma-54.

In terms of biological role, required for activation of most nif operons, which are directly involved in nitrogen fixation. In Azorhizobium caulinodans (strain ATCC 43989 / DSM 5975 / JCM 20966 / LMG 6465 / NBRC 14845 / NCIMB 13405 / ORS 571), this protein is Nif-specific regulatory protein (nifA).